Reading from the N-terminus, the 429-residue chain is Enolase (429 aa).

Q163 is a binding site for (2R)-2-phosphoglycerate. The active-site Proton donor is the E205. Positions 242, 286, and 313 each coordinate Mg(2+). (2R)-2-phosphoglycerate contacts are provided by K338, R367, S368, and K389. The active-site Proton acceptor is K338.

The protein belongs to the enolase family. Requires Mg(2+) as cofactor.

Its subcellular location is the cytoplasm. The protein resides in the secreted. It is found in the cell surface. The catalysed reaction is (2R)-2-phosphoglycerate = phosphoenolpyruvate + H2O. It participates in carbohydrate degradation; glycolysis; pyruvate from D-glyceraldehyde 3-phosphate: step 4/5. Catalyzes the reversible conversion of 2-phosphoglycerate (2-PG) into phosphoenolpyruvate (PEP). It is essential for the degradation of carbohydrates via glycolysis. The protein is Enolase of Geobacter metallireducens (strain ATCC 53774 / DSM 7210 / GS-15).